Consider the following 151-residue polypeptide: Mitochondrial intermembrane space import and assembly protein 40 homolog (151 aa).

A disordered region spans residues 1 to 35 (MGQGLSQPAQAVEEPSPPAVEAAPSSSPSPAPAPS). The span at 7–26 (QPAQAVEEPSPPAVEAAPSS) shows a compositional bias: low complexity. Disulfide bonds link Cys-65–Cys-67, Cys-76–Cys-109, and Cys-86–Cys-99. The region spanning 73 to 117 (NGPCGSQFVDAFSCFLKSTEEEKGSDCVKPFIALQDCIKINPEAF) is the CHCH domain. 2 short sequence motifs (cx9C motif) span residues 76-86 (CGSQFVDAFSC) and 99-109 (CVKPFIALQDC). Positions 123–151 (EEEENDEEAEKSNLKVRAPAWSRESKPKL) are disordered.

The protein localises to the mitochondrion intermembrane space. It is found in the peroxisome matrix. Functionally, required for the import and folding of small cysteine-containing proteins in the mitochondrial intermembrane space. This is Mitochondrial intermembrane space import and assembly protein 40 homolog from Oryza sativa subsp. japonica (Rice).